Here is a 504-residue protein sequence, read N- to C-terminus: Maturase K (504 aa).

Belongs to the intron maturase 2 family. MatK subfamily.

It localises to the plastid. The protein localises to the chloroplast. Functionally, usually encoded in the trnK tRNA gene intron. Probably assists in splicing its own and other chloroplast group II introns. In Amaranthus caudatus (Love-lies-bleeding), this protein is Maturase K.